We begin with the raw amino-acid sequence, 513 residues long: ATP synthase subunit alpha (513 aa).

Residue G169 to T176 participates in ATP binding.

The protein belongs to the ATPase alpha/beta chains family. F-type ATPases have 2 components, CF(1) - the catalytic core - and CF(0) - the membrane proton channel. CF(1) has five subunits: alpha(3), beta(3), gamma(1), delta(1), epsilon(1). CF(0) has three main subunits: a(1), b(2) and c(9-12). The alpha and beta chains form an alternating ring which encloses part of the gamma chain. CF(1) is attached to CF(0) by a central stalk formed by the gamma and epsilon chains, while a peripheral stalk is formed by the delta and b chains.

Its subcellular location is the cell inner membrane. It carries out the reaction ATP + H2O + 4 H(+)(in) = ADP + phosphate + 5 H(+)(out). Functionally, produces ATP from ADP in the presence of a proton gradient across the membrane. The alpha chain is a regulatory subunit. This is ATP synthase subunit alpha from Shewanella putrefaciens (strain CN-32 / ATCC BAA-453).